We begin with the raw amino-acid sequence, 441 residues long: Protein translocase subunit SecY (441 aa).

A run of 10 helical transmembrane segments spans residues 25–45, 78–98, 126–146, 155–175, 184–204, 218–238, 275–295, 318–338, 376–396, and 398–418; these read YFVI…IPGI, IFAL…ILTL, LILA…IPGL, ISFY…LMWL, IGNG…PSSF, VLLF…VVYI, VIPA…ASWF, YILT…GLAF, FLGS…RFFM, and VPFY…IDFI.

The protein belongs to the SecY/SEC61-alpha family. As to quaternary structure, component of the Sec protein translocase complex. Heterotrimer consisting of SecY, SecE and SecG subunits. The heterotrimers can form oligomers, although 1 heterotrimer is thought to be able to translocate proteins. Interacts with the ribosome. Interacts with SecDF, and other proteins may be involved. Interacts with SecA.

Its subcellular location is the cell membrane. Its function is as follows. The central subunit of the protein translocation channel SecYEG. Consists of two halves formed by TMs 1-5 and 6-10. These two domains form a lateral gate at the front which open onto the bilayer between TMs 2 and 7, and are clamped together by SecE at the back. The channel is closed by both a pore ring composed of hydrophobic SecY resides and a short helix (helix 2A) on the extracellular side of the membrane which forms a plug. The plug probably moves laterally to allow the channel to open. The ring and the pore may move independently. The sequence is that of Protein translocase subunit SecY from Buchnera aphidicola subsp. Baizongia pistaciae (strain Bp).